A 493-amino-acid chain; its full sequence is Galactose-1-phosphate uridylyltransferase (493 aa).

The protein belongs to the galactose-1-phosphate uridylyltransferase type 2 family.

The protein resides in the cytoplasm. It catalyses the reaction alpha-D-galactose 1-phosphate + UDP-alpha-D-glucose = alpha-D-glucose 1-phosphate + UDP-alpha-D-galactose. It functions in the pathway carbohydrate metabolism; galactose metabolism. In Lactococcus lactis subsp. lactis (strain IL1403) (Streptococcus lactis), this protein is Galactose-1-phosphate uridylyltransferase (galT).